Consider the following 381-residue polypeptide: Pulmonary surfactant-associated protein B (381 aa).

A signal peptide spans 1–24; that stretch reads MAESHLLQWLLLLLPTLCGPGTAA. Residues 25 to 65 enclose the Saposin A-type domain; that stretch reads WTTSSLACAQGPEFWCQSLEQALQCRALGHCLQEVWGHVGA. Positions 25–200 are excised as a propeptide; sequence WTTSSLACAQ…PHTQDLSEQQ (176 aa). Saposin B-type domains follow at residues 65–147, 204–281, and 295–370; these read ADDL…KSRQ, PLPY…SMDD, and RDSE…GTMS. 9 cysteine pairs are disulfide-bonded: C69–C143, C72–C137, C100–C112, C208–C277, C211–C271, C235–C246, C299–C366, C302–C360, and C325–C335. An N-linked (GlcNAc...) asparagine glycan is attached at N129. Residues 280 to 381 constitute a propeptide that is removed on maturation; that stretch reads DDSAGPRSPT…PLQCIHSPDL (102 aa). N311 is a glycosylation site (N-linked (GlcNAc...) asparagine).

As to quaternary structure, homodimer; disulfide-linked.

It is found in the secreted. It localises to the extracellular space. The protein resides in the surface film. Functionally, pulmonary surfactant-associated proteins promote alveolar stability by lowering the surface tension at the air-liquid interface in the peripheral air spaces. SP-B increases the collapse pressure of palmitic acid to nearly 70 millinewtons per meter. The polypeptide is Pulmonary surfactant-associated protein B (SFTPB) (Homo sapiens (Human)).